Reading from the N-terminus, the 184-residue chain is Protein Syd (184 aa).

This sequence belongs to the Syd family.

Its subcellular location is the cell inner membrane. Interacts with the SecY protein in vivo. May bind preferentially to an uncomplexed state of SecY, thus functioning either as a chelating agent for excess SecY in the cell or as a regulatory factor that negatively controls the translocase function. The sequence is that of Protein Syd from Photorhabdus laumondii subsp. laumondii (strain DSM 15139 / CIP 105565 / TT01) (Photorhabdus luminescens subsp. laumondii).